A 267-amino-acid chain; its full sequence is Eukaryotic translation initiation factor 3 subunit J (267 aa).

2 disordered regions span residues methionine 1–histidine 118 and methionine 221–valine 241. The segment covering aspartate 28–valine 46 has biased composition (acidic residues). Residues serine 44–aspartate 99 adopt a coiled-coil conformation. The span at glutamine 74–glutamate 88 shows a compositional bias: basic and acidic residues. Positions asparagine 90–glutamate 100 are enriched in acidic residues. Composition is skewed to basic and acidic residues over residues arginine 108–histidine 118 and methionine 221–asparagine 231.

Belongs to the eIF-3 subunit J family. As to quaternary structure, component of the eukaryotic translation initiation factor 3 (eIF-3) complex.

The protein resides in the cytoplasm. Its function is as follows. Component of the eukaryotic translation initiation factor 3 (eIF-3) complex, which is involved in protein synthesis of a specialized repertoire of mRNAs and, together with other initiation factors, stimulates binding of mRNA and methionyl-tRNAi to the 40S ribosome. The eIF-3 complex specifically targets and initiates translation of a subset of mRNAs involved in cell proliferation. The chain is Eukaryotic translation initiation factor 3 subunit J (hcr1) from Aspergillus fumigatus (strain CBS 144.89 / FGSC A1163 / CEA10) (Neosartorya fumigata).